The chain runs to 102 residues: Small ribosomal subunit protein uS10 (102 aa).

It belongs to the universal ribosomal protein uS10 family. In terms of assembly, part of the 30S ribosomal subunit.

Its function is as follows. Involved in the binding of tRNA to the ribosomes. The chain is Small ribosomal subunit protein uS10 from Methanocorpusculum labreanum (strain ATCC 43576 / DSM 4855 / Z).